We begin with the raw amino-acid sequence, 552 residues long: Glutamine-dependent NAD(+) synthetase (552 aa).

A CN hydrolase domain is found at 11–253; it reads LRIAMAQFDF…DQWLVVDYAA (243 aa). Residue E52 is the Proton acceptor; for glutaminase activity of the active site. Residue K119 is the For glutaminase activity of the active site. Y125 contacts L-glutamine. C157 functions as the Nucleophile; for glutaminase activity in the catalytic mechanism. 2 residues coordinate L-glutamine: S183 and K189. Residues 275-552 are ligase; it reads AWRAVVRGLK…YPITNGYSGQ (278 aa). Residue 298-305 coordinates ATP; sequence GLSGGIDS. N381 is a binding site for deamido-NAD(+). T405 is a binding site for ATP. Deamido-NAD(+) contacts are provided by E410 and K522.

In the C-terminal section; belongs to the NAD synthetase family.

It catalyses the reaction deamido-NAD(+) + L-glutamine + ATP + H2O = L-glutamate + AMP + diphosphate + NAD(+) + H(+). It participates in cofactor biosynthesis; NAD(+) biosynthesis; NAD(+) from deamido-NAD(+) (L-Gln route): step 1/1. In terms of biological role, catalyzes the ATP-dependent amidation of deamido-NAD to form NAD. Uses L-glutamine as a nitrogen source. The sequence is that of Glutamine-dependent NAD(+) synthetase from Xanthomonas campestris pv. campestris (strain 8004).